A 203-amino-acid polypeptide reads, in one-letter code: Ras-related protein Rab-24 (203 aa).

Y17 carries the phosphotyrosine modification. Residues G19, K20, T21, and T40 each contribute to the GTP site. The Mg(2+) site is built by T21, T40, and D63. Residues 30-45 (DRFLVGPYQNTIGAAF) form a switch I region. The switch II stretch occupies residues 63-80 (DTAGSERYEAMSRIYYRG). GTP-binding residues include G66, K121, D123, and K156. A Phosphotyrosine modification is found at Y172. S-geranylgeranyl cysteine attachment occurs at residues C200 and C201.

The protein belongs to the small GTPase superfamily. Rab family. In terms of assembly, interacts with ZFYVE20. Does not interact with the GDP dissociation inhibitors ARHGDIA and ARHGDIB. It depends on Mg(2+) as a cofactor. In terms of processing, prenylated; prenylation is required for RAB24 localization to autophagosomes. Isoprenylation is inefficient compared to other Rab family members. Phosphorylated at Tyr-17 and Tyr-172. Cytosolic pool of RAB24 is more phosphorylated than the membrane-associated pool. In terms of tissue distribution, widely expressed, with highest expression in brain.

It is found in the cytoplasm. It localises to the cytosol. The protein localises to the membrane. The protein resides in the cytoplasmic vesicle. Its subcellular location is the autophagosome membrane. It is found in the perinuclear region. It localises to the cytoskeleton. The protein localises to the spindle. The enzyme catalyses GTP + H2O = GDP + phosphate + H(+). Its activity is regulated as follows. Regulated by guanine nucleotide exchange factors (GEFs) which promote the exchange of bound GDP for free GTP. Regulated by GTPase activating proteins (GAPs) which increase the GTP hydrolysis activity. Inhibited by GDP dissociation inhibitors (GDIs). Functionally, the small GTPases Rab are key regulators of intracellular membrane trafficking, from the formation of transport vesicles to their fusion with membranes. Rabs cycle between an inactive GDP-bound form and an active GTP-bound form that is able to recruit to membranes different sets of downstream effectors directly responsible for vesicle formation, movement, tethering and fusion. RAB24 is an atypical RAB protein that presents low GTPase activity and thereby exists predominantly in the GTP-bound active state. RAB24 is required for the clearance of late autophagic vacuoles under basal conditions. It is not needed for starvation-induced autophagy. Involved in the modulation of meiotic apparatus assembly and meiotic progression during oocyte maturation, possibly through regulation of kinetochore-microtubule interaction. The chain is Ras-related protein Rab-24 from Mus musculus (Mouse).